The sequence spans 200 residues: Cysteine-rich venom protein VAR8 (200 aa).

The N-terminal stretch at 1 to 22 is a signal peptide; it reads MILLKLYLTLAAILCQSRGTTS. An SCP domain is found at 41–169; it reads NKHNDLRRTV…PLKYFLVCQY (129 aa). 4 disulfide bridges follow: C77/C156, C95/C170, C151/C167, and C189/C196.

This sequence belongs to the CRISP family. Contains 8 disulfide bonds. In terms of tissue distribution, expressed by the venom gland.

The protein resides in the secreted. Blocks ryanodine receptors, and potassium channels. This is Cysteine-rich venom protein VAR8 from Varanus acanthurus (Ridge-tailed monitor).